The sequence spans 1870 residues: RNA1 polyprotein (1870 aa).

Positions 486-654 constitute an SF3 helicase domain; sequence LEKLIELHNS…VPYNADDPCA (169 aa). An ATP-binding site is contributed by 515-522; sequence GASGTGKT. Residues 910-930 form a helical membrane-spanning segment; sequence SLWCMSGDASFVAGAATVFSV. Ser-937 carries the O-(5'-phospho-RNA)-serine modification. The Peptidase C3 domain maps to 963 to 1165; sequence SSCFGDSALW…ASFMPYHASL (203 aa). Active-site for picornain 3C-like protease activity residues include His-1003, Glu-1039, and Cys-1128. The RdRp catalytic domain occupies 1445 to 1572; sequence NNILCCDYSR…SVSDAISSRF (128 aa).

Specific enzymatic cleavages by picornain 3C-like protease in vivo yield mature proteins. Picornain 3C-like protease is autocatalytically processed. Post-translationally, uridylylated by the polymerase and is covalently linked to the 5'-end of genomic RNA. This uridylylated form acts as a nucleotide-peptide primer for the polymerase.

The protein localises to the host membrane. It localises to the host cytoplasm. The protein resides in the host perinuclear region. It is found in the host endoplasmic reticulum. It catalyses the reaction RNA(n) + a ribonucleoside 5'-triphosphate = RNA(n+1) + diphosphate. Its function is as follows. Thiol protease that cleaves the RNA1 and RNA2 polyproteins. Functionally, plays a role in RNA replication. It is covalently linked to the 5'terminus of both viral single-stranded RNA1 and RNA2 molecules. In terms of biological role, down-regulates the RNA1 polyprotein processing and enhances trans-cleavage of RNA2 polyproteins. The protease cofactor and the putative helicase seem to target the replication complexes to ER membranes. Their physical association causes the membrane rearrangement of host ER that may result in formation of the small membranous vesicles that are the site of viral RNA synthesis. The protease cofactor and the putative helicase seem to target the replication complexes to ER membranes. Their physical association causes the membrane rearrangement of host ER that may result in formation of the small membranous vesicles that are the site of viral RNA synthesis. Its function is as follows. Replicates the viral genome. The protein is RNA1 polyprotein of Broad bean wilt virus 2 (BBWV-2).